We begin with the raw amino-acid sequence, 400 residues long: Phosphoglycerate kinase (400 aa).

Residues 23-25, R38, 61-64, R120, and R153 contribute to the substrate site; these read DLN and HFGR. ATP contacts are provided by residues K203, E325, and 355–358; that span reads GGDT.

The protein belongs to the phosphoglycerate kinase family. As to quaternary structure, monomer.

It localises to the cytoplasm. The catalysed reaction is (2R)-3-phosphoglycerate + ATP = (2R)-3-phospho-glyceroyl phosphate + ADP. The protein operates within carbohydrate degradation; glycolysis; pyruvate from D-glyceraldehyde 3-phosphate: step 2/5. This chain is Phosphoglycerate kinase, found in Allorhizobium ampelinum (strain ATCC BAA-846 / DSM 112012 / S4) (Agrobacterium vitis (strain S4)).